Consider the following 392-residue polypeptide: Acetyl-CoA acetyltransferase (392 aa).

The active-site Acyl-thioester intermediate is Cys-85. Residues Cys-206, Ser-207, Val-209, and Lys-332 each coordinate CoA. The active-site Proton acceptor is His-336.

It belongs to the thiolase-like superfamily. Thiolase family. In terms of assembly, interacts with HMG-CoA synthase (HMGCS) that catalyzes the second step in the pathway and with a DUF35 protein. The acetoacetyl-CoA thiolase/HMG-CoA synthase complex channels the intermediate via a fused CoA-binding site, which allows for efficient coupling of the endergonic thiolase reaction with the exergonic HMGCS reaction.

The catalysed reaction is 2 acetyl-CoA = acetoacetyl-CoA + CoA. The protein operates within metabolic intermediate biosynthesis; (R)-mevalonate biosynthesis; (R)-mevalonate from acetyl-CoA: step 1/3. Its function is as follows. Catalyzes the condensation of two acetyl-coA molecules into acetoacetyl-CoA. Functions in the mevalonate (MVA) pathway leading to isopentenyl diphosphate (IPP), a key precursor for the biosynthesis of isoprenoid compounds that are building blocks of archaeal membrane lipids. This chain is Acetyl-CoA acetyltransferase, found in Methanothermococcus thermolithotrophicus (Methanococcus thermolithotrophicus).